A 348-amino-acid polypeptide reads, in one-letter code: Olfactory receptor 2T4 (348 aa).

Residues 1–57 (MDNITWMASHTGWSDFILMGLFRQSKHPMANITWMANHTGWSDFILLGLFRQSKHPA) are Extracellular-facing. N-linked (GlcNAc...) asparagine glycans are attached at residues Asn31 and Asn37. The helical transmembrane segment at 58–81 (LLCVVIFVVFLMALSGNAVLILLI) threads the bilayer. Topologically, residues 82–89 (HCDAHLHT) are cytoplasmic. The chain crosses the membrane as a helical span at residues 90-111 (PMYFFISQLSLMDMAYISVTVP). Topologically, residues 112 to 132 (KMLLDQVMGVNKISAPECGMQ) are extracellular. The cysteines at positions 129 and 221 are disulfide-linked. The chain crosses the membrane as a helical span at residues 133 to 152 (MFFYVTLAGSEFFLLATMAY). Residues 153 to 171 (DRYVAICHPLRYPVLMNHR) are Cytoplasmic-facing. The helical transmembrane segment at 172–190 (VCLFLSSGCWFLGSVDGFT) threads the bilayer. Over 191–227 (FTPITMTFPFRGSREIHHFFCEVPAVLNLSCSDTSLY) the chain is Extracellular. N-linked (GlcNAc...) asparagine glycosylation is present at Asn218. Residues 228-251 (EIFMYLCCVLMLLIPVVIISSSYL) form a helical membrane-spanning segment. Topologically, residues 252 to 268 (LILLTIHGMNSAEGRKK) are cytoplasmic. Residues 269-291 (AFATCSSHLTVVILFYGAAIYTY) traverse the membrane as a helical segment. The Extracellular segment spans residues 292-304 (MLPSSYHTPEKDM). Residues 305–324 (MVSVFYTILTPVVNPLIYSL) traverse the membrane as a helical segment. The Cytoplasmic segment spans residues 325 to 348 (RNKDVMGALKKMLTVEPAFQKAME).

It belongs to the G-protein coupled receptor 1 family.

The protein resides in the cell membrane. Functionally, odorant receptor. In Homo sapiens (Human), this protein is Olfactory receptor 2T4 (OR2T4).